The primary structure comprises 184 residues: Crossover junction endodeoxyribonuclease RuvC (184 aa).

Active-site residues include Asp11, Glu73, and Asp147. 3 residues coordinate Mg(2+): Asp11, Glu73, and Asp147.

The protein belongs to the RuvC family. In terms of assembly, homodimer which binds Holliday junction (HJ) DNA. The HJ becomes 2-fold symmetrical on binding to RuvC with unstacked arms; it has a different conformation from HJ DNA in complex with RuvA. In the full resolvosome a probable DNA-RuvA(4)-RuvB(12)-RuvC(2) complex forms which resolves the HJ. It depends on Mg(2+) as a cofactor.

The protein localises to the cytoplasm. The enzyme catalyses Endonucleolytic cleavage at a junction such as a reciprocal single-stranded crossover between two homologous DNA duplexes (Holliday junction).. Functionally, the RuvA-RuvB-RuvC complex processes Holliday junction (HJ) DNA during genetic recombination and DNA repair. Endonuclease that resolves HJ intermediates. Cleaves cruciform DNA by making single-stranded nicks across the HJ at symmetrical positions within the homologous arms, yielding a 5'-phosphate and a 3'-hydroxyl group; requires a central core of homology in the junction. The consensus cleavage sequence is 5'-(A/T)TT(C/G)-3'. Cleavage occurs on the 3'-side of the TT dinucleotide at the point of strand exchange. HJ branch migration catalyzed by RuvA-RuvB allows RuvC to scan DNA until it finds its consensus sequence, where it cleaves and resolves the cruciform DNA. This is Crossover junction endodeoxyribonuclease RuvC from Neisseria gonorrhoeae (strain ATCC 700825 / FA 1090).